The primary structure comprises 123 residues: uncharacterized protein (123 aa).

The helical transmembrane segment at 5–25 (GTLVIIFAIVLILCIMLLFFY) threads the bilayer. Residues 33 to 54 (PGVLPPPIPPPTPPPPKKKYDH) are disordered. Pro residues predominate over residues 35–47 (VLPPPIPPPTPPP).

Belongs to the asfivirus CP123L family.

The protein resides in the host membrane. It is found in the virion. This is an uncharacterized protein from African swine fever virus (isolate Warthog/Namibia/Wart80/1980) (ASFV).